The following is a 266-amino-acid chain: Interleukin-1 beta (266 aa).

The propeptide occupies Met-1–Asp-113.

Belongs to the IL-1 family. As to quaternary structure, monomer. In its precursor form, weakly interacts with full-length MEFV; the mature cytokine does not interact at all. Interacts with integrins ITGAV:ITGBV and ITGA5:ITGB1; integrin-binding is required for IL1B signaling. Interacts with cargo receptor TMED10; the interaction is direct and is required for the secretion of IL1B mature form. Interacts with HSP90AB1; the interaction facilitates cargo translocation into the ERGIC. Interacts with HSP90B1; the interaction facilitates cargo translocation into the ERGIC.

The protein resides in the cytoplasm. It localises to the cytosol. It is found in the secreted. The protein localises to the lysosome. Its subcellular location is the extracellular exosome. Functionally, potent pro-inflammatory cytokine. Initially discovered as the major endogenous pyrogen, induces prostaglandin synthesis, neutrophil influx and activation, T-cell activation and cytokine production, B-cell activation and antibody production, and fibroblast proliferation and collagen production. Promotes Th17 differentiation of T-cells. Synergizes with IL12/interleukin-12 to induce IFNG synthesis from T-helper 1 (Th1) cells. Plays a role in angiogenesis by inducing VEGF production synergistically with TNF and IL6. Involved in transduction of inflammation downstream of pyroptosis: its mature form is specifically released in the extracellular milieu by passing through the gasdermin-D (GSDMD) pore. The sequence is that of Interleukin-1 beta (IL1B) from Cervus elaphus (Red deer).